Reading from the N-terminus, the 404-residue chain is Putative Peroxidase 48 (404 aa).

A signal peptide spans 1–18 (MRFLGDYKFALLTCSVIA). 4 disulfides stabilise this stretch: Cys-77/Cys-156, Cys-110/Cys-115, Cys-162/Cys-397, and Cys-241/Cys-273. The Proton acceptor role is filled by His-108. Ca(2+)-binding residues include Asp-109, Ile-112, Gly-114, Asp-116, and Ser-118. Asn-136 carries an N-linked (GlcNAc...) asparagine glycan. Substrate is bound at residue Pro-204. His-234 provides a ligand contact to heme b. Residue Ser-235 coordinates Ca(2+). Asn-250 carries N-linked (GlcNAc...) asparagine glycosylation. A disordered region spans residues 276–307 (SVSTSSPSAPPDIGLPPSLPASDSENSYGMSS). The span at 283–294 (SAPPDIGLPPSL) shows a compositional bias: pro residues. Asp-287 contributes to the Ca(2+) binding site. The segment covering 296–307 (ASDSENSYGMSS) has biased composition (polar residues).

Belongs to the peroxidase family. Classical plant (class III) peroxidase subfamily. It depends on heme b as a cofactor. Ca(2+) is required as a cofactor.

The protein resides in the secreted. The catalysed reaction is 2 a phenolic donor + H2O2 = 2 a phenolic radical donor + 2 H2O. Functionally, removal of H(2)O(2), oxidation of toxic reductants, biosynthesis and degradation of lignin, suberization, auxin catabolism, response to environmental stresses such as wounding, pathogen attack and oxidative stress. These functions might be dependent on each isozyme/isoform in each plant tissue. In Arabidopsis thaliana (Mouse-ear cress), this protein is Putative Peroxidase 48 (PER48).